The primary structure comprises 124 residues: Small ribosomal subunit protein uS12 (124 aa).

The interval 1–22 (MATVNQLVRKPRKRKVAKSDVP) is disordered. Asp89 carries the 3-methylthioaspartic acid modification. A disordered region spans residues 99 to 124 (RGSLDTSGVQNRKQGRSKYGTKRPKK). The segment covering 111–124 (KQGRSKYGTKRPKK) has biased composition (basic residues).

It belongs to the universal ribosomal protein uS12 family. As to quaternary structure, part of the 30S ribosomal subunit. Contacts proteins S8 and S17. May interact with IF1 in the 30S initiation complex.

Functionally, with S4 and S5 plays an important role in translational accuracy. Interacts with and stabilizes bases of the 16S rRNA that are involved in tRNA selection in the A site and with the mRNA backbone. Located at the interface of the 30S and 50S subunits, it traverses the body of the 30S subunit contacting proteins on the other side and probably holding the rRNA structure together. The combined cluster of proteins S8, S12 and S17 appears to hold together the shoulder and platform of the 30S subunit. This is Small ribosomal subunit protein uS12 from Marinomonas sp. (strain MWYL1).